Here is a 286-residue protein sequence, read N- to C-terminus: 3-hydroxyanthranilate 3,4-dioxygenase (286 aa).

The interval 1 to 160 (MERRVRVKSW…SEQYRTGKPN (160 aa)) is domain A (catalytic). An O2-binding site is contributed by R43. Fe cation is bound by residues H47, E53, and H91. Position 53 (E53) interacts with substrate. Substrate contacts are provided by R95 and E105. A linker region spans residues 161–177 (PDQLLKELPFPLNTRSI). Residues 178–286 (MKPMSLKAWL…QDPARKKPWW (109 aa)) form a domain B region.

It belongs to the 3-HAO family. In terms of assembly, monomer. It depends on Fe(2+) as a cofactor.

It localises to the cytoplasm. The protein localises to the cytosol. It carries out the reaction 3-hydroxyanthranilate + O2 = (2Z,4Z)-2-amino-3-carboxymuconate 6-semialdehyde. It participates in cofactor biosynthesis; NAD(+) biosynthesis; quinolinate from L-kynurenine: step 3/3. Catalyzes the oxidative ring opening of 3-hydroxyanthranilate to 2-amino-3-carboxymuconate semialdehyde, which spontaneously cyclizes to quinolinate. The chain is 3-hydroxyanthranilate 3,4-dioxygenase (Haao) from Mus musculus (Mouse).